Consider the following 326-residue polypeptide: tRNA-modifying protein YgfZ (326 aa).

The folate site is built by tryptophan 27 and tryptophan 189.

Belongs to the tRNA-modifying YgfZ family.

Its subcellular location is the cytoplasm. Its function is as follows. Folate-binding protein involved in regulating the level of ATP-DnaA and in the modification of some tRNAs. It is probably a key factor in regulatory networks that act via tRNA modification, such as initiation of chromosomal replication. The sequence is that of tRNA-modifying protein YgfZ from Escherichia coli O45:K1 (strain S88 / ExPEC).